A 62-amino-acid chain; its full sequence is Potassium channel toxin alpha-KTx Tx773 (62 aa).

The first 18 residues, 1–18, serve as a signal peptide directing secretion; sequence MQKLFIVLLLFCILRLDA. 3 disulfide bridges follow: Cys28/Cys46, Cys33/Cys59, and Cys37/Cys61.

The protein belongs to the short scorpion toxin superfamily. Potassium channel inhibitor family. Alpha-KTx 23 subfamily. In terms of tissue distribution, expressed by the venom gland.

It localises to the secreted. May block potassium channels. This chain is Potassium channel toxin alpha-KTx Tx773, found in Buthus israelis (Israeli scorpion).